Here is a 357-residue protein sequence, read N- to C-terminus: Uroporphyrinogen decarboxylase (357 aa).

Substrate-binding positions include 34–38, D83, Y158, S213, and H336; that span reads RQAGR.

It belongs to the uroporphyrinogen decarboxylase family. In terms of assembly, homodimer.

It localises to the cytoplasm. It carries out the reaction uroporphyrinogen III + 4 H(+) = coproporphyrinogen III + 4 CO2. It participates in porphyrin-containing compound metabolism; protoporphyrin-IX biosynthesis; coproporphyrinogen-III from 5-aminolevulinate: step 4/4. Catalyzes the decarboxylation of four acetate groups of uroporphyrinogen-III to yield coproporphyrinogen-III. In Mycolicibacterium paratuberculosis (strain ATCC BAA-968 / K-10) (Mycobacterium paratuberculosis), this protein is Uroporphyrinogen decarboxylase.